The sequence spans 495 residues: MRINPTTSGSTVSTLEEKNLGRIAQIIGPVLDVVFPPGKMPNIYNALVVKGRDTVGQQINVTCEVQQLLGNNRVRAVAMSATDGLTRGMEVIDTGAALSVPVGGATLGRIFNVLGEPVDNLGPVDTRTTSPIHRSAPAFIQLDTKLSIFETGIKVVDLLAPYRRGGKIGLFGGAGVGKTVLIMELINNIAKAHGGVSVFGGVGERTREGNDLYMEMKESGVINEKNIAESKVALVYGQMNEPPGARMRVGLTALTMAEYFRDVNEQDVLLFIDNIFRFVQAGSEVSALLGRMPSAVGYQPTLSTEMGSLQERITSTKEGSITSIQAVYVPADDLTDPAPATTFAHLDATTVLSRGLSAKGIYPAVDPLDSTSTMLQPRIVGEEHYETAQRVKQTLQRYKELQDIIAILGLDELSEEDRLTVARARKIERFLSQPFFVAEVFTGSPGKYVGLAETIRGFQLILSGELDGLPEQAFYLVGNIDEATAKAMNLEGEKK.

172 to 179 (GGAGVGKT) provides a ligand contact to ATP.

It belongs to the ATPase alpha/beta chains family. In terms of assembly, F-type ATPases have 2 components, CF(1) - the catalytic core - and CF(0) - the membrane proton channel. CF(1) has five subunits: alpha(3), beta(3), gamma(1), delta(1), epsilon(1). CF(0) has four main subunits: a(1), b(1), b'(1) and c(9-12).

It is found in the plastid. The protein resides in the chloroplast thylakoid membrane. It carries out the reaction ATP + H2O + 4 H(+)(in) = ADP + phosphate + 5 H(+)(out). Produces ATP from ADP in the presence of a proton gradient across the membrane. The catalytic sites are hosted primarily by the beta subunits. This Hyacinthus orientalis (Common hyacinth) protein is ATP synthase subunit beta, chloroplastic.